Here is a 356-residue protein sequence, read N- to C-terminus: Phospho-N-acetylmuramoyl-pentapeptide-transferase (356 aa).

9 consecutive transmembrane segments (helical) span residues A27–M47, M74–A94, Y97–Y117, V128–I148, P164–A184, V201–A221, A241–M261, I284–V304, and T333–L353.

The protein belongs to the glycosyltransferase 4 family. MraY subfamily. It depends on Mg(2+) as a cofactor.

It is found in the cell inner membrane. It carries out the reaction UDP-N-acetyl-alpha-D-muramoyl-L-alanyl-gamma-D-glutamyl-meso-2,6-diaminopimeloyl-D-alanyl-D-alanine + di-trans,octa-cis-undecaprenyl phosphate = di-trans,octa-cis-undecaprenyl diphospho-N-acetyl-alpha-D-muramoyl-L-alanyl-D-glutamyl-meso-2,6-diaminopimeloyl-D-alanyl-D-alanine + UMP. The protein operates within cell wall biogenesis; peptidoglycan biosynthesis. Its function is as follows. Catalyzes the initial step of the lipid cycle reactions in the biosynthesis of the cell wall peptidoglycan: transfers peptidoglycan precursor phospho-MurNAc-pentapeptide from UDP-MurNAc-pentapeptide onto the lipid carrier undecaprenyl phosphate, yielding undecaprenyl-pyrophosphoryl-MurNAc-pentapeptide, known as lipid I. The polypeptide is Phospho-N-acetylmuramoyl-pentapeptide-transferase (Zymomonas mobilis subsp. mobilis (strain ATCC 31821 / ZM4 / CP4)).